Consider the following 684-residue polypeptide: Cleavage and polyadenylation specificity factor subunit 3 (684 aa).

Serine 2 is subject to N-acetylserine. Residues histidine 71, histidine 73, aspartate 75, histidine 76, histidine 158, and aspartate 179 each contribute to the Zn(2+) site. The active-site Proton donor is the histidine 396. Histidine 418 provides a ligand contact to Zn(2+). Glycyl lysine isopeptide (Lys-Gly) (interchain with G-Cter in SUMO) cross-links involve residues lysine 462, lysine 465, and lysine 545. Phosphoserine is present on serine 659. Threonine 681 carries the post-translational modification Phosphothreonine.

Belongs to the metallo-beta-lactamase superfamily. RNA-metabolizing metallo-beta-lactamase-like family. CPSF3 subfamily. As to quaternary structure, component of the cleavage and polyadenylation specificity factor (CPSF) complex, composed of CPSF1, CPSF2, CPSF3, CPSF4 and FIP1L1. Interacts with CPSF2, CSTF2 and SYMPK. Interacts with TUT1; the interaction is direct and mediates the recruitment of the CPSF complex on the 3'UTR of pre-mRNAs. Interacts with WDR33. Interacts with ZC3H3. Zn(2+) is required as a cofactor. Post-translationally, sumoylated on Lys-462, Lys-465 and Lys-545, preferentially by SUMO3.

It is found in the nucleus. In terms of biological role, component of the cleavage and polyadenylation specificity factor (CPSF) complex that plays a key role in pre-mRNA 3'-end formation, recognizing the AAUAAA signal sequence and interacting with poly(A) polymerase and other factors to bring about cleavage and poly(A) addition. Has endonuclease activity, and functions as an mRNA 3'-end-processing endonuclease. Also involved in the histone 3'-end pre-mRNA processing. U7 snRNP-dependent protein that induces both the 3'-endoribonucleolytic cleavage of histone pre-mRNAs and acts as a 5' to 3' exonuclease for degrading the subsequent downstream cleavage product (DCP) of mature histone mRNAs. Cleavage occurs after the 5'-ACCCA-3' sequence in the histone pre-mRNA leaving a 3'hydroxyl group on the upstream fragment containing the stem loop (SL) and 5' phosphate on the downstream cleavage product (DCP) starting with CU nucleotides. The U7-dependent 5' to 3' exonuclease activity is processive and degrades the DCP RNA substrate even after complete removal of the U7-binding site. Binds to the downstream cleavage product (DCP) of histone pre-mRNAs and the cleaved DCP RNA substrate in a U7 snRNP dependent manner. Required for entering/progressing through S-phase of the cell cycle. Required for the selective processing of microRNAs (miRNAs) during embryonic stem cell differentiation via its interaction with ISY1. Required for the biogenesis of all miRNAs from the pri-miR-17-92 primary transcript except miR-92a. Only required for the biogenesis of miR-290 and miR-96 from the pri-miR-290-295 and pri-miR-96-183 primary transcripts, respectively. The sequence is that of Cleavage and polyadenylation specificity factor subunit 3 (CPSF3) from Bos taurus (Bovine).